The following is a 234-amino-acid chain: Triosephosphate isomerase (234 aa).

8–10 (NFK) provides a ligand contact to substrate. Catalysis depends on His90, which acts as the Electrophile. Glu159 acts as the Proton acceptor in catalysis. Residues Gly165 and Ser197 each contribute to the substrate site.

The protein belongs to the triosephosphate isomerase family. Homodimer.

It localises to the cytoplasm. The enzyme catalyses D-glyceraldehyde 3-phosphate = dihydroxyacetone phosphate. The protein operates within carbohydrate biosynthesis; gluconeogenesis. It participates in carbohydrate degradation; glycolysis; D-glyceraldehyde 3-phosphate from glycerone phosphate: step 1/1. Involved in the gluconeogenesis. Catalyzes stereospecifically the conversion of dihydroxyacetone phosphate (DHAP) to D-glyceraldehyde-3-phosphate (G3P). This Helicobacter pylori (strain Shi470) protein is Triosephosphate isomerase.